A 222-amino-acid chain; its full sequence is Ubiquitin-conjugating enzyme E2 S (222 aa).

Met-1 bears the N-acetylmethionine mark. The UBC core domain maps to 11–157 (HIIRLVYKEV…ARLLTEIHGG (147 aa)). Cys-95 serves as the catalytic Glycyl thioester intermediate. The segment at 156–222 (GGAGGPSGRA…TDKKRALRRL (67 aa)) is disordered. Residue Ser-173 is modified to Phosphoserine. The span at 208 to 222 (AAKKKTDKKRALRRL) shows a compositional bias: basic residues.

This sequence belongs to the ubiquitin-conjugating enzyme family. In terms of assembly, component of the APC/C complex, composed of at least 14 distinct subunits that assemble into a complex of at least 19 chains with a combined molecular mass of around 1.2 MDa. Within this complex, directly interacts with ANAPC2 and ANAPC4. Interacts with CDC20, FZR1/CDH1 and VHL. Post-translationally, autoubiquitinated by the APC/C complex during G1, leading to its degradation by the proteasome.

It carries out the reaction S-ubiquitinyl-[E1 ubiquitin-activating enzyme]-L-cysteine + [E2 ubiquitin-conjugating enzyme]-L-cysteine = [E1 ubiquitin-activating enzyme]-L-cysteine + S-ubiquitinyl-[E2 ubiquitin-conjugating enzyme]-L-cysteine.. Its pathway is protein modification; protein ubiquitination. Its function is as follows. Accepts ubiquitin from the E1 complex and catalyzes its covalent attachment to other proteins. Catalyzes 'Lys-11'-linked polyubiquitination. Acts as an essential factor of the anaphase promoting complex/cyclosome (APC/C), a cell cycle-regulated ubiquitin ligase that controls progression through mitosis. Acts by specifically elongating 'Lys-11'-linked polyubiquitin chains initiated by the E2 enzyme UBE2C/UBCH10 on APC/C substrates, enhancing the degradation of APC/C substrates by the proteasome and promoting mitotic exit. Also acts by elongating ubiquitin chains initiated by the E2 enzyme UBE2D1/UBCH5 in vitro; it is however unclear whether UBE2D1/UBCH5 acts as an E2 enzyme for the APC/C in vivo. Also involved in ubiquitination and subsequent degradation of VHL, resulting in an accumulation of HIF1A. In vitro able to promote polyubiquitination using all 7 ubiquitin Lys residues, except 'Lys-48'-linked polyubiquitination. The protein is Ubiquitin-conjugating enzyme E2 S (UBE2S) of Homo sapiens (Human).